The primary structure comprises 389 residues: Na(+)/H(+) antiporter NhaA (389 aa).

A run of 10 helical transmembrane segments spans residues 8–28, 48–68, 91–111, 119–139, 173–193, 214–234, 262–282, 288–308, 327–347, and 361–381; these read INFLQEFSIPLILGVLIALVW, ISLHFFVNDIFMVFFFAMAAI, MATLGGVLGPALVFLGLNALI, GWGIPTATDIALAWLVARVVF, NPVAPLWLLLTVAGMLVAYLL, AGLYLAHIHPALALVFIVPFL, WKIFVDFGLLLFGLTNAGVEF, LTWLVLIALVGGKTIGIFLMG, LLVAGVIAAMGLTVALFVSGV, and GALFSAVAAVIAFALGKVLGI.

The protein belongs to the NhaA Na(+)/H(+) (TC 2.A.33) antiporter family.

It is found in the cell membrane. It carries out the reaction Na(+)(in) + 2 H(+)(out) = Na(+)(out) + 2 H(+)(in). In terms of biological role, na(+)/H(+) antiporter that extrudes sodium in exchange for external protons. This is Na(+)/H(+) antiporter NhaA from Desulfitobacterium hafniense (strain DSM 10664 / DCB-2).